Consider the following 285-residue polypeptide: Urease accessory protein UreD 1 (285 aa).

This sequence belongs to the UreD family. As to quaternary structure, ureD, UreF and UreG form a complex that acts as a GTP-hydrolysis-dependent molecular chaperone, activating the urease apoprotein by helping to assemble the nickel containing metallocenter of UreC. The UreE protein probably delivers the nickel.

Its subcellular location is the cytoplasm. In terms of biological role, required for maturation of urease via the functional incorporation of the urease nickel metallocenter. This is Urease accessory protein UreD 1 from Pseudomonas syringae pv. syringae (strain B728a).